We begin with the raw amino-acid sequence, 375 residues long: Phosphate acyltransferase (375 aa).

The disordered stretch occupies residues 354–375; the sequence is AQDDATSADADAPGDSETGSTN. Residues 356–368 show a composition bias toward low complexity; sequence DDATSADADAPGD.

The protein belongs to the PlsX family. As to quaternary structure, homodimer. Probably interacts with PlsY.

The protein resides in the cytoplasm. It carries out the reaction a fatty acyl-[ACP] + phosphate = an acyl phosphate + holo-[ACP]. The protein operates within lipid metabolism; phospholipid metabolism. In terms of biological role, catalyzes the reversible formation of acyl-phosphate (acyl-PO(4)) from acyl-[acyl-carrier-protein] (acyl-ACP). This enzyme utilizes acyl-ACP as fatty acyl donor, but not acyl-CoA. This Ruegeria sp. (strain TM1040) (Silicibacter sp.) protein is Phosphate acyltransferase.